The sequence spans 332 residues: Biotin synthase (332 aa).

Positions 53 to 282 constitute a Radical SAM core domain; the sequence is HFGKKVKLNM…TKEIRISGGR (230 aa). Residues Cys-71, Cys-75, and Cys-78 each coordinate [4Fe-4S] cluster. Residues Cys-115, Cys-147, Cys-207, and Arg-277 each coordinate [2Fe-2S] cluster.

It belongs to the radical SAM superfamily. Biotin synthase family. As to quaternary structure, homodimer. [4Fe-4S] cluster serves as cofactor. It depends on [2Fe-2S] cluster as a cofactor.

The catalysed reaction is (4R,5S)-dethiobiotin + (sulfur carrier)-SH + 2 reduced [2Fe-2S]-[ferredoxin] + 2 S-adenosyl-L-methionine = (sulfur carrier)-H + biotin + 2 5'-deoxyadenosine + 2 L-methionine + 2 oxidized [2Fe-2S]-[ferredoxin]. It participates in cofactor biosynthesis; biotin biosynthesis; biotin from 7,8-diaminononanoate: step 2/2. Functionally, catalyzes the conversion of dethiobiotin (DTB) to biotin by the insertion of a sulfur atom into dethiobiotin via a radical-based mechanism. This is Biotin synthase from Bacillus cereus (strain ATCC 10987 / NRS 248).